The chain runs to 463 residues: Stress-activated protein kinase jnk-1 (463 aa).

Over residues 1–12 the composition is skewed to polar residues; it reads MEERLSTTSSYP. The disordered stretch occupies residues 1-23; sequence MEERLSTTSSYPSHPGRSVEEDH. Residues 119-412 form the Protein kinase domain; that stretch reads YQNLRLIGSG…ISVDDALRHP (294 aa). ATP is bound by residues 126–131 and lysine 148; that span reads GSGAQG. Residue aspartate 244 is the Proton acceptor of the active site. Threonine 276 carries the post-translational modification Phosphothreonine. The TXY signature appears at 276 to 278; the sequence is TPY. Tyrosine 278 is subject to Phosphotyrosine.

The protein belongs to the protein kinase superfamily. CMGC Ser/Thr protein kinase family. MAP kinase subfamily. As to quaternary structure, binds to the scaffolding protein, unc-16. Unc-16 also binds other components of the JNK signaling pathway. Interacts with daf-16. It depends on Mg(2+) as a cofactor. Dually phosphorylated on Thr-276 and Tyr-278, which activates the enzyme. Expressed in most neurons, including nerve ring, head ganglions, dorsal and ventral nerve cords and tail ganglions. The Thr-276/Tyr-278 phosphorylated form is present in the nerve ring upon heat exposure.

The protein localises to the cytoplasm. It localises to the perikaryon. It is found in the cell projection. Its subcellular location is the axon. The enzyme catalyses L-seryl-[protein] + ATP = O-phospho-L-seryl-[protein] + ADP + H(+). It carries out the reaction L-threonyl-[protein] + ATP = O-phospho-L-threonyl-[protein] + ADP + H(+). Activated by threonine and tyrosine phosphorylation by either of the dual specificity kinases, jkk-1 and mek-1. Its function is as follows. Serine/threonine-protein kinase which responds to activation by environmental stress by phosphorylating a number of transcription factors such as daf-16, and thus regulates transcriptional activity. By phosphorylating daf-16, plays a role in daf-16 nuclear translocation in intestinal cells in response to environmental stresses such as heat and oxidative stresses. Downstream of jkk-1, may coordinate locomotion via type-D GABAergic motoneurons and regulates synaptic vesicle transport in conjunction with unc-16. Independently of jkk-1, may regulate some mechanosensory responses, such as response to touch. Independently of jkk-1 and downstream of mek-1, plays a role in resistance to heavy metals, such as Cu(2+) or Cd(2+). Regulates germline cell apoptosis in response to heavy metals such as Cu(2+) and arsenite. Required for dopaminergic CEP neuron degeneration in response to Mn(2+). Required for normal sleep bout quantity and arousal thresholds during the transition from the last larval stage to adulthood in well-fed animals. Downstream of jkk-1 but independently of mek-1, positively regulates lifespan. The chain is Stress-activated protein kinase jnk-1 (jnk-1) from Caenorhabditis elegans.